We begin with the raw amino-acid sequence, 251 residues long: CDP-diacylglycerol pyrophosphatase (251 aa).

The helical transmembrane segment at 4–24 (AGLLFLVMIVIAVVAAGIGYW) threads the bilayer.

It belongs to the Cdh family.

It is found in the cell inner membrane. It carries out the reaction a CDP-1,2-diacyl-sn-glycerol + H2O = a 1,2-diacyl-sn-glycero-3-phosphate + CMP + 2 H(+). Its pathway is phospholipid metabolism; CDP-diacylglycerol degradation; phosphatidate from CDP-diacylglycerol: step 1/1. In Escherichia coli O7:K1 (strain IAI39 / ExPEC), this protein is CDP-diacylglycerol pyrophosphatase.